We begin with the raw amino-acid sequence, 312 residues long: MKVAVLGAAGGIGQALALLLKTQLPAGSELSLYDIAPVTPGVAVDLSHIPTDVTITGFSGIDPTAALVGADVVLISAGVARKPGMDRSDLFNINAGIIKNLASKCAEVCPTACIGIITNPVNTTVPIAAEVLKQAGVYDKRKLFGITTLDVIRSETFVSALKGISLADVAVPVIGGHSGATILPLLSQVKGVEFTAEEIATLTTRIQNAGTEVVEAKAGGGSATLSMGHAAARFGLSLVRALQGEKGIVECTYVDGGSEHATFFAQPVLLGKNGVEEVLAYGDLSDFETNARDAMLEELKANITLGEEFVAG.

Residues 7–13 and aspartate 34 each bind NAD(+); that span reads GAAGGIG. Arginine 81 and arginine 87 together coordinate substrate. Residues asparagine 94 and 117-119 each bind NAD(+); that span reads ITN. Substrate is bound by residues asparagine 119 and arginine 153. The active-site Proton acceptor is the histidine 177. Methionine 227 contributes to the NAD(+) binding site.

Belongs to the LDH/MDH superfamily. MDH type 1 family. In terms of assembly, homodimer.

It carries out the reaction (S)-malate + NAD(+) = oxaloacetate + NADH + H(+). Its function is as follows. Catalyzes the reversible oxidation of malate to oxaloacetate. This is Malate dehydrogenase (mdh) from Moritella sp. (strain 2D2).